Consider the following 1551-residue polypeptide: UDP-glucose:glycoprotein glucosyltransferase 1 (1551 aa).

The first 42 residues, 1-42, serve as a signal peptide directing secretion; that stretch reads MCSRGDANAAGAAAARRVTGLCYNMGLLIALALLCLFSLAEA. N-linked (GlcNAc...) asparagine glycosylation is found at asparagine 269, asparagine 536, asparagine 1015, and asparagine 1228. A glucosyltransferase region spans residues 1244–1551; sequence KTEEVKQDKD…QEGSQKHEEL (308 aa). Residue serine 1277 is modified to Phosphoserine. Positions 1531-1551 are disordered; that stretch reads KELGTLHEEETQEGSQKHEEL. A Prevents secretion from ER motif is present at residues 1548–1551; that stretch reads HEEL.

This sequence belongs to the glycosyltransferase 8 family. Monomer as well as in a tight complex with SELENOF. Interacts with METTL23. Part of a large chaperone multiprotein complex comprising DNAJB11, HSP90B1, HSPA5, HYOU, PDIA2, PDIA4, PDIA6, PPIB, SDF2L1, UGGT1 and very small amounts of ERP29, but not, or at very low levels, CALR nor CANX. Requires Ca(2+) as cofactor.

The protein resides in the endoplasmic reticulum lumen. It is found in the endoplasmic reticulum-Golgi intermediate compartment. The enzyme catalyses N(4)-(alpha-D-Man-(1-&gt;2)-alpha-D-Man-(1-&gt;2)-alpha-D-Man-(1-&gt;3)-[alpha-D-Man-(1-&gt;2)-alpha-D-Man-(1-&gt;3)-[alpha-D-Man-(1-&gt;2)-alpha-D-Man-(1-&gt;6)]-alpha-D-Man-(1-&gt;6)]-beta-D-Man-(1-&gt;4)-beta-D-GlcNAc-(1-&gt;4)-beta-D-GlcNAc)-L-asparaginyl-[protein] (N-glucan mannose isomer 9A1,2,3B1,2,3) + UDP-alpha-D-glucose = N(4)-(alpha-D-Glc-(1-&gt;3)-alpha-D-Man-(1-&gt;2)-alpha-D-Man-(1-&gt;2)-alpha-D-Man-(1-&gt;3)-[alpha-D-Man-(1-&gt;2)-alpha-D-Man-(1-&gt;3)-[alpha-D-Man-(1-&gt;2)-alpha-D-Man-(1-&gt;6)]-alpha-D-Man-(1-&gt;6)]-beta-D-Man-(1-&gt;4)-beta-D-GlcNAc-(1-&gt;4)-beta-D-GlcNAc)-L-asparaginyl-[protein] + UDP + H(+). It functions in the pathway protein modification; protein glycosylation. Functionally, recognizes glycoproteins with minor folding defects. Reglucosylates single N-glycans near the misfolded part of the protein, thus providing quality control for protein folding in the endoplasmic reticulum. Reglucosylated proteins are recognized by calreticulin for recycling to the endoplasmic reticulum and refolding or degradation. This is UDP-glucose:glycoprotein glucosyltransferase 1 (Uggt1) from Rattus norvegicus (Rat).